The following is a 438-amino-acid chain: MGKPIVAIVGRPNVGKSTLFNKLAGKRIAIVEDTPGVTRDRIYAQAEWLNHNFTIIDTGGIEPESEDIIVAQMRRQAEMAIEMADVIMFIVDGKEGLTPADNEVALMLRKSKKPIVLVVNKIDRIEEEDNMYEFYNLGIGEPTTISASQALGLGDMLDKIVENFPKGYQDEEEDEYIRIAFVGKPNVGKSSLINKILGEERNIVSNIPGTTRDAIDSFLERDEDKFILIDTAGLRRRSKVKDQIERYSTVRTYAAIDRADVCILLIDAEEGISEQDKKIIGYAHELNKALMVVVNKWDLIEKETNTMNRFKKELQSELSFMSYAPYIFISAKTGQRVGKVLDLAKECYTNYSKRISTGVLNDVISKAVMMKEPPIVAMNRLKIYYVTQVATKAPTFVFFVNDPRTLHFSYERYLENQLRQSFDFTGTGIKMEFRERKE.

EngA-type G domains are found at residues Pro4–Tyr168 and Ile177–Ser352. GTP contacts are provided by residues Gly10 to Ser17, Asp57 to Ile61, Asn120 to Asp123, Gly183 to Ser190, Asp230 to Leu234, and Asn295 to Asp298. One can recognise a KH-like domain in the interval Lys353 to Lys437.

Belongs to the TRAFAC class TrmE-Era-EngA-EngB-Septin-like GTPase superfamily. EngA (Der) GTPase family. Associates with the 50S ribosomal subunit.

Functionally, GTPase that plays an essential role in the late steps of ribosome biogenesis. The sequence is that of GTPase Der from Clostridium tetani (strain Massachusetts / E88).